Here is a 302-residue protein sequence, read N- to C-terminus: Bacteriochlorophyll synthase 33 kDa chain (302 aa).

A run of 9 helical transmembrane segments spans residues 25 to 45 (ITWFPPIWAYLCGTVSVGIWP), 49 to 69 (WPLVLLGMVLAGPLVCGMSQA), 97 to 117 (WGLYIALLMTVLSLAVGWMLG), 119 to 139 (WGFGATVFGVLAAWAYSVEPI), 145 to 165 (GWWGPGLVALCYEGLPWFTGA), 166 to 186 (AVLSAGAPSFFIVTVALLYAF), 223 to 243 (LACTVMAMAQILVITLLVIWG), 246 to 266 (IHAGIITALLVAQLFAMRVLL), and 275 to 295 (WYNGTGVTLYVLGMMVAAFAI).

It is found in the cell membrane. The protein operates within porphyrin-containing compound metabolism; bacteriochlorophyll biosynthesis (light-independent). Catalyzes the esterification of bacteriochlorophyllide a by geranylgeraniol-PPi. The protein is Bacteriochlorophyll synthase 33 kDa chain (bchG) of Cereibacter sphaeroides (strain ATCC 17023 / DSM 158 / JCM 6121 / CCUG 31486 / LMG 2827 / NBRC 12203 / NCIMB 8253 / ATH 2.4.1.) (Rhodobacter sphaeroides).